The chain runs to 64 residues: Anti-sigma-G factor Gin (64 aa).

Residues C11, C14, C30, and C33 each coordinate Zn(2+).

As to quaternary structure, probably functions as a homodimer. Interacts with sigma-G factor, recognition occurs via the first 71 residues of sigma-G. Requires Zn(2+) as cofactor.

In terms of biological role, an anti-sigma-G factor, prevents premature activation of sigma-G factor in the forespore; overexpression leads to 1000-fold reduction in spore formation, spore formation stops after engulfment. Overexpression also inhibits sigma-G transcription activation activity. When both Gin and sigma-G are expressed in E.coli Gin inhibits sigma-G, strongly suggesting Gin inhibits by direct physical interaction. The chain is Anti-sigma-G factor Gin from Bacillus subtilis (strain 168).